Reading from the N-terminus, the 546-residue chain is Chaperonin GroEL 2 (546 aa).

ATP-binding positions include 30 to 33 (TLGP), K51, 87 to 91 (DGTTT), G415, 479 to 481 (NAA), and D495.

The protein belongs to the chaperonin (HSP60) family. Forms a cylinder of 14 subunits composed of two heptameric rings stacked back-to-back. Interacts with the co-chaperonin GroES.

It is found in the cytoplasm. The enzyme catalyses ATP + H2O + a folded polypeptide = ADP + phosphate + an unfolded polypeptide.. In terms of biological role, together with its co-chaperonin GroES, plays an essential role in assisting protein folding. The GroEL-GroES system forms a nano-cage that allows encapsulation of the non-native substrate proteins and provides a physical environment optimized to promote and accelerate protein folding. The protein is Chaperonin GroEL 2 of Chromobacterium violaceum (strain ATCC 12472 / DSM 30191 / JCM 1249 / CCUG 213 / NBRC 12614 / NCIMB 9131 / NCTC 9757 / MK).